Consider the following 570-residue polypeptide: CDKN2A-interacting protein (570 aa).

At Ala2 the chain carries N-acetylalanine. The region spanning 19–126 (VETLRCEGET…KVKKRGISSS (108 aa)) is the XRN2-binding (XTBD) domain. Residues 122-345 (GISSSNEGVE…TSLLMPKSSS (224 aa)) are disordered. Ser124 carries the post-translational modification Phosphoserine. The span at 147 to 162 (VERDHGKKSAKTDRSA) shows a compositional bias: basic and acidic residues. The segment covering 167 to 183 (SSGSKGSSTKSESSGTS) has biased composition (low complexity). Lys176 is covalently cross-linked (Glycyl lysine isopeptide (Lys-Gly) (interchain with G-Cter in SUMO1)). A compositionally biased stretch (polar residues) spans 184–198 (ARSNSGVSHQNSSTS). Residues 203-221 (SVCSQSSSNSSQVTSAGSG) show a composition bias toward low complexity. A compositionally biased stretch (basic and acidic residues) spans 224–233 (SEPEAPDKHG). Phosphoserine is present on Ser234. 2 stretches are compositionally biased toward low complexity: residues 234 to 248 (SASF…SLNS) and 271 to 301 (SSVS…PLLS). The segment covering 302–317 (CKSSSETASSGLTTKA) has biased composition (polar residues). Over residues 318 to 345 (SSEANISSSVSKNSSSSGTSLLMPKSSS) the composition is skewed to low complexity. Ser378 is modified (phosphoserine). The segment at 383–407 (SQLASKSSSQSSTSQLPSKSTSQSS) is disordered. A DRBM domain is found at 452–527 (NHGELLNAAI…SREALKLFLK (76 aa)).

Belongs to the CARF family. As to quaternary structure, interacts with CDKN2A/p14ARF, p53/TP53 and MDM2. Interacts with CHEK2 and MAPK3. Interacts with XRN2. May be ubiquitinated.

It localises to the nucleus. Its subcellular location is the nucleoplasm. Its function is as follows. Regulates DNA damage response and cell proliferation in a dose-dependent manner through a number of signaling pathways involved in cell proliferation, apoptosis and senescence. This Rattus norvegicus (Rat) protein is CDKN2A-interacting protein (Cdkn2aip).